The chain runs to 100 residues: Large ribosomal subunit protein bL21 (100 aa).

It belongs to the bacterial ribosomal protein bL21 family. Part of the 50S ribosomal subunit. Contacts protein L20.

Functionally, this protein binds to 23S rRNA in the presence of protein L20. This Rhodospirillum rubrum (strain ATCC 11170 / ATH 1.1.1 / DSM 467 / LMG 4362 / NCIMB 8255 / S1) protein is Large ribosomal subunit protein bL21.